The sequence spans 206 residues: Histidine biosynthesis bifunctional protein HisIE (206 aa).

The interval 1–117 is phosphoribosyl-AMP cyclohydrolase; sequence MGSETTAAGD…SCFPTAPSQF (117 aa). Residues 118 to 206 are phosphoribosyl-ATP pyrophosphohydrolase; sequence LGSLDALIAE…AVALLESRHK (89 aa).

This sequence in the N-terminal section; belongs to the PRA-CH family. It in the C-terminal section; belongs to the PRA-PH family.

The protein localises to the cytoplasm. The enzyme catalyses 1-(5-phospho-beta-D-ribosyl)-ATP + H2O = 1-(5-phospho-beta-D-ribosyl)-5'-AMP + diphosphate + H(+). It catalyses the reaction 1-(5-phospho-beta-D-ribosyl)-5'-AMP + H2O = 1-(5-phospho-beta-D-ribosyl)-5-[(5-phospho-beta-D-ribosylamino)methylideneamino]imidazole-4-carboxamide. The protein operates within amino-acid biosynthesis; L-histidine biosynthesis; L-histidine from 5-phospho-alpha-D-ribose 1-diphosphate: step 2/9. It functions in the pathway amino-acid biosynthesis; L-histidine biosynthesis; L-histidine from 5-phospho-alpha-D-ribose 1-diphosphate: step 3/9. In Xanthomonas campestris pv. campestris (strain ATCC 33913 / DSM 3586 / NCPPB 528 / LMG 568 / P 25), this protein is Histidine biosynthesis bifunctional protein HisIE.